A 356-amino-acid polypeptide reads, in one-letter code: 5-formaminoimidazole-4-carboxamide-1-(beta)-D-ribofuranosyl 5'-monophosphate synthetase (356 aa).

2 residues coordinate 5-amino-1-(5-phospho-beta-D-ribosyl)imidazole-4-carboxamide: H27 and S94. Residues 101-333 (TENFADMAVP…YADLMEENLS (233 aa)) enclose the ATP-grasp domain. ATP-binding positions include 145–196 (PHDI…TRYY) and E226. Position 255 (N255) interacts with 5-amino-1-(5-phospho-beta-D-ribosyl)imidazole-4-carboxamide. The Mg(2+) site is built by E293 and E306.

This sequence belongs to the phosphohexose mutase family. It depends on Mg(2+) as a cofactor. Mn(2+) is required as a cofactor.

It catalyses the reaction 5-amino-1-(5-phospho-beta-D-ribosyl)imidazole-4-carboxamide + formate + ATP = 5-formamido-1-(5-phospho-D-ribosyl)imidazole-4-carboxamide + ADP + phosphate. It functions in the pathway purine metabolism; IMP biosynthesis via de novo pathway; 5-formamido-1-(5-phospho-D-ribosyl)imidazole-4-carboxamide from 5-amino-1-(5-phospho-D-ribosyl)imidazole-4-carboxamide (formate route): step 1/1. Functionally, catalyzes the ATP- and formate-dependent formylation of 5-aminoimidazole-4-carboxamide-1-beta-d-ribofuranosyl 5'-monophosphate (AICAR) to 5-formaminoimidazole-4-carboxamide-1-beta-d-ribofuranosyl 5'-monophosphate (FAICAR) in the absence of folates. The polypeptide is 5-formaminoimidazole-4-carboxamide-1-(beta)-D-ribofuranosyl 5'-monophosphate synthetase (Methanosarcina barkeri (strain Fusaro / DSM 804)).